Here is a 713-residue protein sequence, read N- to C-terminus: F-box/WD repeat-containing protein 7 (713 aa).

Residues 1–150 (MNQELLSVGS…DEHTHNSNVT (150 aa)) form a disordered region. Ser-26 carries the post-translational modification Phosphoserine. Over residues 46 to 55 (RHQEEEHTAR) the composition is skewed to basic and acidic residues. Residues 69-84 (QNDSQQGQVEENNNRF) show a composition bias toward polar residues. The span at 87–135 (VDEDSSGNQEEQEEDEEHAGEQEEEEEEEEEEEEEEEMDQESDDFDQSD) shows a compositional bias: acidic residues. Residues 94-136 (NQEEQEEDEEHAGEQEEEEEEEEEEEEEEEMDQESDDFDQSDD) are a coiled coil. The span at 136–145 (DSSREDEHTH) shows a compositional bias: basic and acidic residues. Thr-211 carries the phosphothreonine modification. The residue at position 233 (Ser-233) is a Phosphoserine. Positions 284–330 (RDFISLLPKELALYVLSFLEPKDLLQAAQTCRYWRILAEDNLLWREK) constitute an F-box domain. WD repeat units lie at residues 384 to 424 (GHDD…RTLV), 426 to 462 (HTGGVWSSQMRDNIIISGSTDRTLKVWNAETGECIHT), 465 to 504 (GHTSTVRCMHLHEKRVVSGSRDATLRVWDIETGQCLHVLM), 506 to 542 (HVAAVRCVQYDGRRVVSGAYDFMVKVWDPETETCLHT), 545 to 584 (GHTNRVYSLQFDGIHVVSGSLDTSIRVWDVETGNCIHTLT), 586 to 624 (HQSLTSGMELKDNILVSGNADSTVKIWDIKTGQCLQTLQ), and 628 to 665 (KHQSAVTCLQFNKNFVITSSDDGTVKLWDLKTGEFIRN).

As to quaternary structure, homodimer; homodimerization plays a role in substrate binding and/or ubiquitination and degradation. Component of the SCF(FBXW7) complex consisting of CUL1, RBX1, SKP1 and FBXW7. Interacts (via F-box domain) with SKP1. Interacts (via F-box domain) with pseudophosphatase STYX; the interaction is direct and prevents FBXW7 interaction with SKP1. Interacts with cyclin-E (CCNE1 or CCNE2). Interacts with PSEN1. Forms a trimeric complex with NOTCH1 and SGK1. Interacts with NOTCH1 intracellular domain/NICD and NOTCH4 intracellular domain/NICD. Interacts with NOTCH2 intracellular domain (N2ICD). Interacts with MYC (when phosphorylated). Interacts with USP28, counteracting ubiquitination of MYC. Interacts (when phosphorylated at Thr-211) with PIN1, disrupting FBXW7 dimerization and promoting FBXW7 autoubiquitination and degradation. Interacts with UBE2QL1. Interacts with FAM83D; promotes FBXW7 degradation. Interacts with MYCN; FBXW7 competes with AURKA for binding to unphosphorylated MYCN but not for binding to phosphorylated MYCN. Interacts with JUN. Found in a complex with JUN and PRR7. Interacts with JUN and PRR7; the interaction inhibits ubiquitination-mediated JUN degradation, promoting its phosphorylation and transcriptional activity. Interacts with NFE2L1. Interacts with NR1D1. Interacts with RICTOR; mediates RICTOR ubiquitination and degradation. In terms of processing, phosphorylation at Thr-211 promotes interaction with PIN1, leading to disrupt FBXW7 dimerization and promoting FBXW7 autoubiquitination and degradation. Phosphorylated by ATM at Ser-26 in response to DNA damage, promoting recruitment to DNA damage sites and 'Lys-63'-linked ubiquitination of phosphorylated XRCC4. Ubiquitinated: autoubiquitinates following phosphorylation at Thr-211 and subsequent interaction with PIN1. Ubiquitination leads to its degradation.

It is found in the nucleus. It localises to the nucleoplasm. The protein resides in the chromosome. The protein operates within protein modification; protein ubiquitination. In terms of biological role, substrate recognition component of a SCF (SKP1-CUL1-F-box protein) E3 ubiquitin-protein ligase complex which mediates the ubiquitination and subsequent proteasomal degradation of target proteins. Recognizes and binds phosphorylated sites/phosphodegrons within target proteins and thereafter brings them to the SCF complex for ubiquitination. Identified substrates include cyclin-E (CCNE1 or CCNE2), JUN, MYC, NOTCH1 released notch intracellular domain (NICD), NOTCH2, MCL1, MLST8, RICTOR and probably PSEN1. Acts as a negative regulator of JNK signaling by binding to phosphorylated JUN and promoting its ubiquitination and subsequent degradation. SCF(FBXW7) complex mediates the ubiquitination and subsequent degradation of NFE2L1. Involved in bone homeostasis and negative regulation of osteoclast differentiation. Regulates the amplitude of the cyclic expression of hepatic core clock genes and genes involved in lipid and glucose metabolism via ubiquitination and proteasomal degradation of their transcriptional repressor NR1D1; CDK1-dependent phosphorylation of NR1D1 is necessary for SCF(FBXW7)-mediated ubiquitination. Also able to promote 'Lys-63'-linked ubiquitination in response to DNA damage. The SCF(FBXW7) complex facilitates double-strand break repair following phosphorylation by ATM: phosphorylation promotes localization to sites of double-strand breaks and 'Lys-63'-linked ubiquitination of phosphorylated XRCC4, enhancing DNA non-homologous end joining. The polypeptide is F-box/WD repeat-containing protein 7 (Rattus norvegicus (Rat)).